Here is a 296-residue protein sequence, read N- to C-terminus: Cytidine deaminase (296 aa).

CMP/dCMP-type deaminase domains lie at 48-168 (DVDA…FGPV) and 187-296 (QNVN…FIEE). 89–91 (NME) lines the substrate pocket. H102 serves as a coordination point for Zn(2+). E104 (proton donor) is an active-site residue. 2 residues coordinate Zn(2+): C129 and C132.

It belongs to the cytidine and deoxycytidylate deaminase family. As to quaternary structure, homodimer. Zn(2+) is required as a cofactor.

It catalyses the reaction cytidine + H2O + H(+) = uridine + NH4(+). The enzyme catalyses 2'-deoxycytidine + H2O + H(+) = 2'-deoxyuridine + NH4(+). In terms of biological role, this enzyme scavenges exogenous and endogenous cytidine and 2'-deoxycytidine for UMP synthesis. In Pectobacterium atrosepticum (strain SCRI 1043 / ATCC BAA-672) (Erwinia carotovora subsp. atroseptica), this protein is Cytidine deaminase.